The following is a 900-amino-acid chain: Serine-rich coiled-coil domain-containing protein 1 (900 aa).

2 disordered regions span residues 1-100 and 156-178; these read MGDS…HSNM and KSEG…QSTR. Positions 29 to 56 are enriched in low complexity; sequence LPSSPSSSNTVGVHSSSPSSTNSSSGST. Residues 81 to 100 are compositionally biased toward polar residues; the sequence is EPTNQNLSISNGAQPGHSNM. The stretch at 673–707 forms a coiled coil; sequence MKDECSMLKLQLKEKDELISQLQEELGKVRHLQKA.

It belongs to the CCSER family.

This chain is Serine-rich coiled-coil domain-containing protein 1 (CCSER1), found in Homo sapiens (Human).